A 335-amino-acid chain; its full sequence is Adenosine deaminase (335 aa).

Zn(2+)-binding residues include H12 and H14. Substrate contacts are provided by H14 and D16. Position 197 (H197) interacts with Zn(2+). E200 functions as the Proton donor in the catalytic mechanism. D278 serves as a coordination point for Zn(2+).

It belongs to the metallo-dependent hydrolases superfamily. Adenosine and AMP deaminases family. Adenosine deaminase subfamily. It depends on Zn(2+) as a cofactor.

The catalysed reaction is adenosine + H2O + H(+) = inosine + NH4(+). It catalyses the reaction 2'-deoxyadenosine + H2O + H(+) = 2'-deoxyinosine + NH4(+). Its function is as follows. Catalyzes the hydrolytic deamination of adenosine and 2-deoxyadenosine. The protein is Adenosine deaminase of Clostridium botulinum (strain Langeland / NCTC 10281 / Type F).